A 153-amino-acid chain; its full sequence is Ribosome maturation factor RimP (153 aa).

This sequence belongs to the RimP family.

It is found in the cytoplasm. Its function is as follows. Required for maturation of 30S ribosomal subunits. In Clostridium tetani (strain Massachusetts / E88), this protein is Ribosome maturation factor RimP.